The chain runs to 77 residues: Metallocarboxypeptidase inhibitor (77 aa).

A signal peptide spans 1-32 (MAQKFTILFTILLVVIAAQDVMAQDATLTKLF). Q33 bears the Pyrrolidone carboxylic acid mark. Intrachain disulfides connect C39/C55, C43/C58, and C49/C65. Positions 70–77 (GRAMAIGV) are cleaved as a propeptide — hydrophobic peptide.

This sequence to potato MCPI. As to expression, ovaries.

Functionally, may play a defensive role against insect attacks. The chain is Metallocarboxypeptidase inhibitor from Solanum lycopersicum (Tomato).